A 414-amino-acid chain; its full sequence is Lipoyl synthase, mitochondrial (414 aa).

The transit peptide at 1–31 (MAVSTSHFRSLCASRPLSRTAIVGHISCRSY) directs the protein to the mitochondrion. The disordered stretch occupies residues 31-51 (YATTEPSPSATSTSTTTTARR). Residues 32 to 48 (ATTEPSPSATSTSTTTT) are compositionally biased toward low complexity. 7 residues coordinate [4Fe-4S] cluster: Cys131, Cys136, Cys142, Cys162, Cys166, Cys169, and Ser377. The Radical SAM core domain maps to 145–366 (GSDKSAATAT…RQRALDMGFL (222 aa)).

The protein belongs to the radical SAM superfamily. Lipoyl synthase family. Requires [4Fe-4S] cluster as cofactor.

It is found in the mitochondrion. It catalyses the reaction [[Fe-S] cluster scaffold protein carrying a second [4Fe-4S](2+) cluster] + N(6)-octanoyl-L-lysyl-[protein] + 2 oxidized [2Fe-2S]-[ferredoxin] + 2 S-adenosyl-L-methionine + 4 H(+) = [[Fe-S] cluster scaffold protein] + N(6)-[(R)-dihydrolipoyl]-L-lysyl-[protein] + 4 Fe(3+) + 2 hydrogen sulfide + 2 5'-deoxyadenosine + 2 L-methionine + 2 reduced [2Fe-2S]-[ferredoxin]. It functions in the pathway protein modification; protein lipoylation via endogenous pathway; protein N(6)-(lipoyl)lysine from octanoyl-[acyl-carrier-protein]: step 2/2. Its function is as follows. Catalyzes the radical-mediated insertion of two sulfur atoms into the C-6 and C-8 positions of the octanoyl moiety bound to the lipoyl domains of lipoate-dependent enzymes, thereby converting the octanoylated domains into lipoylated derivatives. In Aspergillus fumigatus (strain CBS 144.89 / FGSC A1163 / CEA10) (Neosartorya fumigata), this protein is Lipoyl synthase, mitochondrial.